We begin with the raw amino-acid sequence, 1487 residues long: Adhesion G protein-coupled receptor L2 (1487 aa).

The first 25 residues, 1-25 (MVSSGCRMRSLWFIIIISFSPSTEG), serve as a signal peptide directing secretion. Residues 26-855 (FSRAALPFGL…VHHLLLTVIT (830 aa)) are Extracellular-facing. Residues 41-130 (SCEGYSIDLR…KYLEVQYECV (90 aa)) form the SUEL-type lectin domain. N-linked (GlcNAc...) asparagine glycosylation occurs at N99. The 260-residue stretch at 139-398 (VCPGTLKAIV…ILRYSLEFGP (260 aa)) folds into the Olfactomedin-like domain. Over residues 423–439 (STTSSASQRGPVSSTAA) the composition is skewed to polar residues. Residues 423–461 (STTSSASQRGPVSSTAAGPQDGSRGTKPPPAVSTTKIPP) form a disordered region. 2 N-linked (GlcNAc...) asparagine glycosylation sites follow: N524 and N735. The region spanning 663 to 841 (TRVSMPTENI…AILMAHREIA (179 aa)) is the GAIN-B domain. Cystine bridges form between C792-C823 and C811-C825. A GPS region spans residues 792–841 (CSFWNYSERTMMGYWSTQGCKLVDTNKTRTTCACSHLTNFAILMAHREIA). The tract at residues 829–841 (TNFAILMAHREIA) is stachel. Residues 856 to 876 (WVGIVVSLVCLAICIFTFCFF) form a helical membrane-spanning segment. Residues 877-884 (RGLQSDRN) lie on the Cytoplasmic side of the membrane. A helical transmembrane segment spans residues 885–905 (TIHKNLCINLFIAEFIFLIGI). Residues 906 to 911 (DKTKYT) are Extracellular-facing. The chain crosses the membrane as a helical span at residues 912–932 (IACPVFAGLLHFFFLAAFSWM). Residues 933–955 (CLEGVQLYLMLVEVFESEYSRKK) lie on the Cytoplasmic side of the membrane. Residues 956-976 (YYYVAGYLFPATVVGVSAAID) traverse the membrane as a helical segment. Residues 977-994 (YKSYGTVQACWLHVDNYF) are Extracellular-facing. Residues 995 to 1015 (IWSFIGPVTFIILLNIIFLVI) traverse the membrane as a helical segment. The Cytoplasmic portion of the chain corresponds to 1016–1064 (TLCKMVKHSNTLKPDSSRLENINNYRVCDGYYNTDLPGYEDNKPFIKSW). A helical transmembrane segment spans residues 1065 to 1085 (VLGAFALLCLLGLTWSFGLLF). Topologically, residues 1086–1090 (VNEET) are extracellular. The chain crosses the membrane as a helical span at residues 1091–1111 (VVMAYLFTAFNAFQGLFIFIF). Residues 1386–1430 (EADDHLQSPNRDSLYTSMPNLRDSPYPESSPDMAEDLSPSRRSEN) are disordered. Over residues 1392–1404 (QSPNRDSLYTSMP) the composition is skewed to polar residues. Phosphoserine is present on residues S1402, S1437, and S1458.

Belongs to the G-protein coupled receptor 2 family. Adhesion G-protein coupled receptor (ADGR) subfamily. In terms of assembly, heterodimer of 2 chains generated by proteolytic processing; the large extracellular N-terminal fragment and the membrane-bound C-terminal fragment predominantly remain associated and non-covalently linked. Post-translationally, autoproteolytically processed at the GPS region of the GAIN-B domain; this cleavage modulates receptor activity. As to expression, ubiquitously expressed. In neurons, specifically localizes to dendritic domains of CA1 pyramidal neurons in the S. lacunosummoleculare.

Its subcellular location is the postsynaptic cell membrane. With respect to regulation, forms a heterodimer of 2 chains generated by proteolytic processing that remain associated through non-covalent interactions mediated by the GAIN-B domain. In the inactivated receptor, the Stachel sequence (also named stalk) is embedded in the GAIN-B domain, where it adopts a beta-strand conformation. On activation, the Stachel moves into the 7 transmembrane region and adopts a twisted hook-shaped configuration that forms contacts within the receptor, leading to coupling of a G-alpha protein, which activates signaling. The cleaved GAIN-B and N-terminal domains can then dissociate from the rest of the receptor. Functionally, orphan adhesion G-protein coupled receptor (aGPCR), which mediates synapse specificity. Ligand binding causes a conformation change that triggers signaling via guanine nucleotide-binding proteins (G proteins) and modulates the activity of downstream effectors. Following G-protein coupled receptor activation, associates with cell adhesion molecules that are expressed at the surface of adjacent cells to direct synapse specificity. Specifically mediates the establishment of perforant-path synapses on CA1-region pyramidal neurons in the hippocampus. Localizes to postsynaptic spines in excitatory synapses in the S.lacunosum-moleculare and interacts with presynaptic cell adhesion molecules, such as teneurins, promoting synapse formation. This chain is Adhesion G protein-coupled receptor L2, found in Mus musculus (Mouse).